A 305-amino-acid chain; its full sequence is Glycine--tRNA ligase alpha subunit (305 aa).

Belongs to the class-II aminoacyl-tRNA synthetase family. As to quaternary structure, tetramer of two alpha and two beta subunits.

It is found in the cytoplasm. It carries out the reaction tRNA(Gly) + glycine + ATP = glycyl-tRNA(Gly) + AMP + diphosphate. The polypeptide is Glycine--tRNA ligase alpha subunit (Streptococcus mutans serotype c (strain ATCC 700610 / UA159)).